A 113-amino-acid polypeptide reads, in one-letter code: MHEMALTQNIIEIVEEQCRRNHVNKVTDIWLEIGPLSCVEPDAITFCFDVYSKDTVMENCKIHFIPVPALAYCWHCEKTVKIKTHHDACPECGGVHLQKQGGDELRIKEIAVE.

His2 is a Ni(2+) binding site. Zn(2+) is bound by residues Cys73, Cys76, Cys89, and Cys92.

It belongs to the HypA/HybF family.

In terms of biological role, involved in the maturation of [NiFe] hydrogenases. Required for nickel insertion into the metal center of the hydrogenase. This chain is Hydrogenase maturation factor HypA, found in Actinobacillus succinogenes (strain ATCC 55618 / DSM 22257 / CCUG 43843 / 130Z).